Here is a 118-residue protein sequence, read N- to C-terminus: Small ribosomal subunit protein uS13 (118 aa).

Residues 94–118 (SLPLRGQRTKTNARTRKGPRKAIKK) form a disordered region.

The protein belongs to the universal ribosomal protein uS13 family. In terms of assembly, part of the 30S ribosomal subunit. Forms a loose heterodimer with protein S19. Forms two bridges to the 50S subunit in the 70S ribosome.

Functionally, located at the top of the head of the 30S subunit, it contacts several helices of the 16S rRNA. In the 70S ribosome it contacts the 23S rRNA (bridge B1a) and protein L5 of the 50S subunit (bridge B1b), connecting the 2 subunits; these bridges are implicated in subunit movement. Contacts the tRNAs in the A and P-sites. This Pseudoalteromonas atlantica (strain T6c / ATCC BAA-1087) protein is Small ribosomal subunit protein uS13.